Consider the following 258-residue polypeptide: Tegument protein VP22 (258 aa).

The interval 66 to 143 is disordered; it reads VQPAARGRDR…RAPPGANAVA (78 aa). The segment covering 77–118 has biased composition (low complexity); that stretch reads AAAGTTVAAPAAAPARRSSSRASSRPPRAAADPPVLRPATRG. A Nuclear localization signal motif is present at residues 131-134; it reads PRPR. The Nuclear export signal signature appears at 204–216; that stretch reads LDRMLKSAAIRIL. The segment at 234-258 is disordered; sequence RAQRPAARGSTSGGESRLRGERARP. The span at 249-258 shows a compositional bias: basic and acidic residues; it reads SRLRGERARP.

Belongs to the alphaherpesvirinae VP22 tegument protein family. Interacts with gE (via C-terminus); this interaction is necessary for the recruitment of VP22 to the Golgi and its packaging into virions. Interacts with gM (via C-terminus). Interacts with VP16; this interaction allows the formation of a tripartite complex composed of VP16, VP22 and UL41/VHS. Interacts with the capsid-binding protein UL16. Interacts with host CGAS. In terms of processing, highly phosphorylated in the host cell. Packaging is selective for underphosphorylated forms.

The protein resides in the virion tegument. Its subcellular location is the host cytoplasm. It localises to the host nucleus. The protein localises to the host Golgi apparatus. Functionally, tegument protein that plays different roles during the time course of infection. Participates in both the accumulation of viral mRNAs and viral protein translation at late time of infection. Modulates the RNase activity of the virion host shutoff protein UL41 probably to ensure necessary levels of key cellular mRNAs and proteins. Plays a role in microtubule reorganization that occurs after viral infection by stabilizing microtubule network. Plays a role in the inhibition of host innate immune system by targeting the CGAS enzymatic activity which is the principal cytosolic DNA sensor that detects invading viral DNA. Acts by mediating disruption of liquid-like droplets in which CGAS is activated, thereby preventing CGAS activity. The chain is Tegument protein VP22 from Bovine herpesvirus 1.1 (strain Cooper) (BoHV-1).